Here is a 395-residue protein sequence, read N- to C-terminus: Sensor protein DltS (395 aa).

The next 2 helical transmembrane spans lie at 9–29 (FVFLTMSILIVVVLFLFAVSN) and 136–156 (FLILVFTIFGFCLLAAVSLYL). Residues 177-387 (DASHELKTPI…RLEVQLPIDG (211 aa)) enclose the Histidine kinase domain. His-180 is modified (phosphohistidine; by autocatalysis).

Its subcellular location is the cell membrane. The catalysed reaction is ATP + protein L-histidine = ADP + protein N-phospho-L-histidine.. Member of the two-component regulatory system DltS/DltR. Regulates the expression of the dlt operon. Probably phosphorylates DltR. This Streptococcus agalactiae serotype III (strain NEM316) protein is Sensor protein DltS (dltS).